Here is a 688-residue protein sequence, read N- to C-terminus: Polyribonucleotide nucleotidyltransferase (688 aa).

Positions 484 and 490 each coordinate Mg(2+). A KH domain is found at 550–609 (PTTEIFNVAPDKIVEIIGQGGRVIREIVEKFEVKIDLNKPSGEVKIMGNKERVLKTKEFI). Residues 626–688 (DEVLEAQVKR…NKGKIALDLA (63 aa)) enclose the S1 motif domain.

Belongs to the polyribonucleotide nucleotidyltransferase family. Requires Mg(2+) as cofactor.

It is found in the cytoplasm. It carries out the reaction RNA(n+1) + phosphate = RNA(n) + a ribonucleoside 5'-diphosphate. Its function is as follows. Involved in mRNA degradation. Catalyzes the phosphorolysis of single-stranded polyribonucleotides processively in the 3'- to 5'-direction. The sequence is that of Polyribonucleotide nucleotidyltransferase from Helicobacter pylori (strain Shi470).